We begin with the raw amino-acid sequence, 122 residues long: Large ribosomal subunit protein bL12 (122 aa).

Belongs to the bacterial ribosomal protein bL12 family. Homodimer. Part of the ribosomal stalk of the 50S ribosomal subunit. Forms a multimeric L10(L12)X complex, where L10 forms an elongated spine to which 2 to 4 L12 dimers bind in a sequential fashion. Binds GTP-bound translation factors.

Its function is as follows. Forms part of the ribosomal stalk which helps the ribosome interact with GTP-bound translation factors. Is thus essential for accurate translation. The polypeptide is Large ribosomal subunit protein bL12 (Borrelia hermsii (strain HS1 / DAH)).